The sequence spans 366 residues: Aminomethyltransferase (366 aa).

Belongs to the GcvT family. The glycine cleavage system is composed of four proteins: P, T, L and H.

The catalysed reaction is N(6)-[(R)-S(8)-aminomethyldihydrolipoyl]-L-lysyl-[protein] + (6S)-5,6,7,8-tetrahydrofolate = N(6)-[(R)-dihydrolipoyl]-L-lysyl-[protein] + (6R)-5,10-methylene-5,6,7,8-tetrahydrofolate + NH4(+). The glycine cleavage system catalyzes the degradation of glycine. This chain is Aminomethyltransferase, found in Bacillus cereus (strain ZK / E33L).